The primary structure comprises 481 residues: Ras-GEF domain-containing family member 1A (481 aa).

In terms of domain architecture, N-terminal Ras-GEF spans 41-170 (QDGHLISGSL…AIAQMTQSLL (130 aa)). One can recognise a Ras-GEF domain in the interval 214–461 (DPLVLAQQLT…FVASFESEGP (248 aa)).

As to expression, detected in brain and spinal cord. Highly expressed in a number of intrahepatic cholangiocarcinoma tissue biopsies.

Guanine nucleotide exchange factor (GEF) with specificity for RAP2A, KRAS, HRAS, and NRAS (in vitro). Plays a role in cell migration. This is Ras-GEF domain-containing family member 1A (RASGEF1A) from Homo sapiens (Human).